Consider the following 778-residue polypeptide: Arf-GAP with coiled-coil, ANK repeat and PH domain-containing protein 2 (778 aa).

Residues 1 to 226 form the BAR domain; that stretch reads MKMTVDFEEC…MKDLGAQLDR (226 aa). Residues 266-361 enclose the PH domain; sequence GIVMEGYLFK…WIKAVQTSIA (96 aa). The tract at residues 371–391 is disordered; it reads SEKLDKKSSPSTGSLDSGNES. Positions 379–388 are enriched in polar residues; it reads SPSTGSLDSG. Residues serine 384 and serine 387 each carry the phosphoserine modification. Residues 399-520 form the Arf-GAP domain; that stretch reads ESALQRVQCV…KFVDKYSVSS (122 aa). The segment at 414-437 adopts a C4-type zinc-finger fold; the sequence is CCDCGLADPRWASINLGITLCIEC. Residues 518 to 596 are disordered; the sequence is VSSSPPEQEK…EPEGERQDSS (79 aa). Serine 521 bears the Phosphoserine mark. Over residues 524 to 539 the composition is skewed to basic and acidic residues; the sequence is EQEKKVVSKDSEEKRL. Residues 550–569 show a composition bias toward polar residues; the sequence is VRTSIQSSVKSNDSGIQQSS. Residues serine 581 and serine 584 each carry the phosphoserine modification. ANK repeat units follow at residues 640 to 669, 673 to 702, and 706 to 735; these read NKAT…NVNQ, QGRG…NQHA, and EGKD…NEEM. A Phosphotyrosine modification is found at tyrosine 742. Serine 775 is subject to Phosphoserine.

Interacts with RAB35 (GTP-bound form); the interaction is direct and probably recruits ACAP2 to membranes. Interacts with MICALL1; the interaction is indirect through RAB35.

The protein localises to the endosome membrane. Its subcellular location is the cell membrane. GAP activity stimulated by phosphatidylinositol 4,5-bisphosphate (PIP2) and phosphatidic acid. GTPase-activating protein (GAP) for ADP ribosylation factor 6 (ARF6). Doesn't show GAP activity for RAB35. The sequence is that of Arf-GAP with coiled-coil, ANK repeat and PH domain-containing protein 2 (ACAP2) from Oryctolagus cuniculus (Rabbit).